A 441-amino-acid chain; its full sequence is FBD-associated F-box protein At5g18780 (441 aa).

Positions 10 to 56 (EDRISILPEPLLCHILSFLRTKDSVRTSVLSSRWRDLWLWVPRLDLD) constitute an F-box domain. The region spanning 366 to 410 (LPRCLISSLASVDIESPITDKATELKLVSYLLENSTTLKKLVLRL) is the FBD domain.

The protein is FBD-associated F-box protein At5g18780 of Arabidopsis thaliana (Mouse-ear cress).